We begin with the raw amino-acid sequence, 178 residues long: Putative peroxiredoxin in rubredoxin operon (178 aa).

Residues 3–163 (RLVGKPAPEF…TLRVLKAFQT (161 aa)) enclose the Thioredoxin domain. The Cysteine sulfenic acid (-SOH) intermediate role is filled by C50.

It belongs to the peroxiredoxin family. AhpC/Prx1 subfamily. As to quaternary structure, homodimer; disulfide-linked, upon oxidation.

Its subcellular location is the cytoplasm. It catalyses the reaction a hydroperoxide + [protein]-dithiol = [protein]-disulfide + an alcohol + H2O. Thiol-specific peroxidase that catalyzes the reduction of hydrogen peroxide and organic hydroperoxides to water and alcohols, respectively. Plays a role in cell protection against oxidative stress by detoxifying peroxides. This is Putative peroxiredoxin in rubredoxin operon from Clostridium pasteurianum.